A 417-amino-acid polypeptide reads, in one-letter code: Serine hydroxymethyltransferase (417 aa).

(6S)-5,6,7,8-tetrahydrofolate contacts are provided by residues Leu117 and 121–123 (GHL). At Lys226 the chain carries N6-(pyridoxal phosphate)lysine.

The protein belongs to the SHMT family. Homodimer. Pyridoxal 5'-phosphate is required as a cofactor.

It localises to the cytoplasm. The catalysed reaction is (6R)-5,10-methylene-5,6,7,8-tetrahydrofolate + glycine + H2O = (6S)-5,6,7,8-tetrahydrofolate + L-serine. Its pathway is one-carbon metabolism; tetrahydrofolate interconversion. The protein operates within amino-acid biosynthesis; glycine biosynthesis; glycine from L-serine: step 1/1. In terms of biological role, catalyzes the reversible interconversion of serine and glycine with tetrahydrofolate (THF) serving as the one-carbon carrier. This reaction serves as the major source of one-carbon groups required for the biosynthesis of purines, thymidylate, methionine, and other important biomolecules. Also exhibits THF-independent aldolase activity toward beta-hydroxyamino acids, producing glycine and aldehydes, via a retro-aldol mechanism. This is Serine hydroxymethyltransferase from Syntrophus aciditrophicus (strain SB).